The sequence spans 175 residues: Interferon a3 (175 aa).

The signal sequence occupies residues Met1–Cys23. Cys24 and Cys120 are oxidised to a cystine.

This sequence belongs to the alpha/beta interferon family. In terms of tissue distribution, isoform 1 and isoform 2 are expressed in several tissues, including gill, spleen, intestine, kidney and skin.

The protein resides in the secreted. It is found in the cytoplasm. The protein localises to the cytosol. Its function is as follows. Key player in antiviral response. Induces expression of TLRs, including that of TLR3, TLR9 and TLR8a1, and that of cytosolic pattern recognition receptors, including RIGI, IFIH1/MDA5 and DHX58/LGP2. Also induces MX1 and its own expression. In the presence of intracellular IFNAR2 (iIFNAR2) and IFNAR1B, intracellular isoform 3 may mediate STAT1 and STAT2 phosphorylation and induction of EIF2AK2, MX1 and RSAD2. This is Interferon a3 from Oncorhynchus mykiss (Rainbow trout).